The sequence spans 205 residues: Guanylate kinase (205 aa).

In terms of domain architecture, Guanylate kinase-like spans glycine 5–glutamate 184. ATP is bound at residue glycine 12 to glycine 19.

The protein belongs to the guanylate kinase family.

The protein resides in the cytoplasm. It carries out the reaction GMP + ATP = GDP + ADP. Essential for recycling GMP and indirectly, cGMP. This Listeria monocytogenes serotype 4b (strain F2365) protein is Guanylate kinase.